The primary structure comprises 103 residues: Co-chaperonin GroES (103 aa).

This sequence belongs to the GroES chaperonin family. Heptamer of 7 subunits arranged in a ring. Interacts with the chaperonin GroEL.

It localises to the cytoplasm. Functionally, together with the chaperonin GroEL, plays an essential role in assisting protein folding. The GroEL-GroES system forms a nano-cage that allows encapsulation of the non-native substrate proteins and provides a physical environment optimized to promote and accelerate protein folding. GroES binds to the apical surface of the GroEL ring, thereby capping the opening of the GroEL channel. In Synechococcus elongatus (strain ATCC 33912 / PCC 7942 / FACHB-805) (Anacystis nidulans R2), this protein is Co-chaperonin GroES.